Here is a 160-residue protein sequence, read N- to C-terminus: Transcriptional repressor NrdR (160 aa).

A zinc finger lies at 3–34 (CPFCGNADTQVVDSRVSEEGDTIRRRRRCLSC). The ATP-cone domain maps to 49 to 139 (PSVVKRDGSR…VYKSFEDIGE (91 aa)).

The protein belongs to the NrdR family. Zn(2+) is required as a cofactor.

Functionally, negatively regulates transcription of bacterial ribonucleotide reductase nrd genes and operons by binding to NrdR-boxes. In Bordetella bronchiseptica (strain ATCC BAA-588 / NCTC 13252 / RB50) (Alcaligenes bronchisepticus), this protein is Transcriptional repressor NrdR.